Here is a 244-residue protein sequence, read N- to C-terminus: Small ribosomal subunit protein eS4 (244 aa).

An S4 RNA-binding domain is found at leucine 43–glutamate 106.

It belongs to the eukaryotic ribosomal protein eS4 family.

The protein is Small ribosomal subunit protein eS4 of Methanococcus maripaludis (strain C6 / ATCC BAA-1332).